Reading from the N-terminus, the 479-residue chain is MFFSKVMLTRRILVRGLATAKSSAPKLTDVLIVGGGPAGLTLAASIKNSPQLKDLKTTLVDMVDLKDKLSDFYNSPPDYFTNRIVSVTPRSIHFLENNAGATLMHDRIQSYDGLYVTDGCSKATLDLARDSMLCMIEIINIQASLYNRISQYDSKKDSIDIIDNTKVVNIKHSDPNDPLSWPLVTLSNGEVYKTRLLVGADGFNSPTRRFSQIPSRGWMYNAYGVVASMKLEYPPFKLRGWQRFLPTGPIAHLPMPENNATLVWSSSERLSRLLLSLPPESFTALINAAFVLEDADMNYYYRTLEDGSMDTDKLIEDIKFRTEEIYATLKDESDIDEIYPPRVVSIIDKTRARFPLKLTHADRYCTDRVALVGDAAHTTHPLAGQGLNMGQTDVHGLVYALEKAMERGLDIGSSLSLEPFWAERYPSNNVLLGMADKLFKLYHTNFPPVVALRTFGLNLTNKIGPVKNMIIDTLGGNEK.

The N-terminal 17 residues, 1–17 (MFFSKVMLTRRILVRGL), are a transit peptide targeting the mitochondrion.

The protein belongs to the UbiH/COQ6 family. In terms of assembly, component of a multi-subunit COQ enzyme complex, composed of at least COQ3, COQ4, COQ5, COQ6, COQ7 and COQ9. Requires FAD as cofactor.

It is found in the mitochondrion inner membrane. It carries out the reaction 4-hydroxy-3-(all-trans-hexaprenyl)benzoate + 2 reduced [2Fe-2S]-[ferredoxin] + O2 + 2 H(+) = 3,4-dihydroxy-5-(all-trans-hexaprenyl)benzoate + 2 oxidized [2Fe-2S]-[ferredoxin] + H2O. It catalyses the reaction 2-methoxy-6-(all-trans-hexaprenyl)phenol + 2 reduced [2Fe-2S]-[ferredoxin] + O2 + 2 H(+) = 2-methoxy-6-(all-trans-hexaprenyl)benzene-1,4-diol + 2 oxidized [2Fe-2S]-[ferredoxin] + H2O. The catalysed reaction is 4-amino-3-(all-trans-hexaprenyl)benzoate + 2 reduced [2Fe-2S]-[ferredoxin] + O2 + 2 H(+) = 4-amino-5-hydroxy-3-(all-trans-hexaprenyl)benzoate + 2 oxidized [2Fe-2S]-[ferredoxin] + H2O. The enzyme catalyses 4-amino-5-hydroxy-3-(all-trans-hexaprenyl)benzoate + 4 reduced [2Fe-2S]-[ferredoxin] + O2 + 5 H(+) = 3,4-dihydroxy-5-(all-trans-hexaprenyl)benzoate + 4 oxidized [2Fe-2S]-[ferredoxin] + NH4(+) + H2O. Its pathway is cofactor biosynthesis; ubiquinone biosynthesis. FAD-dependent monooxygenase required for two non-consecutive steps during ubiquinone biosynthesis. Required for the C5-ring hydroxylation during ubiquinone biosynthesis by catalyzing the hydroxylation of 4-hydroxy-3-(all-trans-hexaprenyl)benzoic acid to 3,4-dihydroxy-5-(all-trans-hexaprenyl)benzoic acid. Also acts downstream of COQ4, for the C1-hydroxylation during ubiquinone biosynthesis by catalyzing the hydroxylation of 2-methoxy-6-(all-trans-hexaprenyl)phenol to 2-methoxy-6-(all-trans-hexaprenyl)benzene-1,4-diol. The electrons required for the hydroxylation reaction are funneled indirectly from NADPH via ferredoxin (YAH1) and ferredoxin reductase (ARH1) to COQ6. Can also convert 3-hexaprenyl-4-aminobenzoic acid (HAB), a COQ2-prenylated pABA, to DHHB in a two step process. HAB is first hydroxylated at C5 to yield 3-hexaprenyl-4-amino-5-hydroxybenzoic acid (HHAB) which is further deaminated at C4 by COQ6 to produce DHHB. In Saccharomyces cerevisiae (strain ATCC 204508 / S288c) (Baker's yeast), this protein is Ubiquinone biosynthesis monooxygenase COQ6, mitochondrial.